A 432-amino-acid polypeptide reads, in one-letter code: 2-oxoglutarate-dependent dioxygenase AOP2 (432 aa).

The Fe2OG dioxygenase domain maps to 281–378 (SGDDVEANDD…RYTAAIFTCP (98 aa)). His-301, Asp-303, and His-358 together coordinate Fe cation. Arg-369 is a 2-oxoglutarate binding site.

This sequence belongs to the iron/ascorbate-dependent oxidoreductase family. It depends on Fe(2+) as a cofactor.

Functionally, 2-oxoglutarate-dependent dioxygenase involved in glucosinolates biosynthesis. Catalyzes the conversion of methylsulfinylalkyl glucosinolates to alkenyl glucosinolates. This is 2-oxoglutarate-dependent dioxygenase AOP2 (AOP2) from Arabidopsis thaliana (Mouse-ear cress).